Here is a 209-residue protein sequence, read N- to C-terminus: MKTLVILSSILGDRSNSKQLADHLLARLKQSEPGGTVKIRDLAADPVPYFDGATVGALFTPAEARNAEQQRIAALSDDLVAELFDADRIVFAVPVYNFNLPAQFKSYIDHIARAGVTFRYTAEGKPEGLVQGKQVLMLIARGGKSEGTPDDTMTPYLKQMLAFLGMTDVTFIAAEGMAMGELAAQEGLALARQRIDALSLDARQGLAAA.

Residues S9 and 15 to 17 (SNS) contribute to the FMN site.

The protein belongs to the azoreductase type 1 family. Homodimer. FMN is required as a cofactor.

It catalyses the reaction 2 a quinone + NADH + H(+) = 2 a 1,4-benzosemiquinone + NAD(+). It carries out the reaction N,N-dimethyl-1,4-phenylenediamine + anthranilate + 2 NAD(+) = 2-(4-dimethylaminophenyl)diazenylbenzoate + 2 NADH + 2 H(+). Its function is as follows. Quinone reductase that provides resistance to thiol-specific stress caused by electrophilic quinones. Functionally, also exhibits azoreductase activity. Catalyzes the reductive cleavage of the azo bond in aromatic azo compounds to the corresponding amines. In Bordetella parapertussis (strain 12822 / ATCC BAA-587 / NCTC 13253), this protein is FMN-dependent NADH:quinone oxidoreductase.